The primary structure comprises 182 residues: Keratin, ultra high-sulfur matrix protein (182 aa).

It belongs to the KRTAP type 5 family. Cuticle layers of differentiating wool follicles.

Functionally, the keratin products of mammalian epidermal derivatives such as wool and hair consist of microfibrils embedded in a rigid matrix of other proteins. The matrix proteins include the high-sulfur and high-tyrosine keratins, having molecular weights of 6-20 kDa, whereas the microfibrils contain the larger, low-sulfur keratins (40-56 kDa). This is Keratin, ultra high-sulfur matrix protein from Ovis aries (Sheep).